The following is a 255-amino-acid chain: Pimeloyl-[acyl-carrier protein] methyl ester esterase (255 aa).

The AB hydrolase-1 domain maps to 16–242 (LVLLHGWGLN…AAHAPFISHP (227 aa)). Substrate-binding positions include Trp-22, 82–83 (SL), and 143–147 (FLALQ). The Nucleophile role is filled by Ser-82. Catalysis depends on residues Asp-207 and His-235. His-235 serves as a coordination point for substrate.

This sequence belongs to the AB hydrolase superfamily. Carboxylesterase BioH family. Monomer.

It localises to the cytoplasm. The enzyme catalyses 6-carboxyhexanoyl-[ACP] methyl ester + H2O = 6-carboxyhexanoyl-[ACP] + methanol + H(+). Its pathway is cofactor biosynthesis; biotin biosynthesis. Its function is as follows. The physiological role of BioH is to remove the methyl group introduced by BioC when the pimeloyl moiety is complete. It allows to synthesize pimeloyl-ACP via the fatty acid synthetic pathway through the hydrolysis of the ester bonds of pimeloyl-ACP esters. The chain is Pimeloyl-[acyl-carrier protein] methyl ester esterase from Pectobacterium carotovorum subsp. carotovorum (strain PC1).